A 199-amino-acid chain; its full sequence is Translation initiation factor IF-3 (199 aa).

It belongs to the IF-3 family. As to quaternary structure, monomer.

Its subcellular location is the cytoplasm. IF-3 binds to the 30S ribosomal subunit and shifts the equilibrium between 70S ribosomes and their 50S and 30S subunits in favor of the free subunits, thus enhancing the availability of 30S subunits on which protein synthesis initiation begins. The protein is Translation initiation factor IF-3 of Gloeobacter violaceus (strain ATCC 29082 / PCC 7421).